Here is a 240-residue protein sequence, read N- to C-terminus: UDP-2,3-diacylglucosamine hydrolase (240 aa).

Residues D8, H10, D41, N79, and H114 each coordinate Mn(2+). A substrate-binding site is contributed by N79–R80. Substrate-binding residues include D122, S160, N164, K167, and H195. Mn(2+) is bound by residues H195 and H197.

The protein belongs to the LpxH family. It depends on Mn(2+) as a cofactor.

The protein localises to the cell inner membrane. It carries out the reaction UDP-2-N,3-O-bis[(3R)-3-hydroxytetradecanoyl]-alpha-D-glucosamine + H2O = 2-N,3-O-bis[(3R)-3-hydroxytetradecanoyl]-alpha-D-glucosaminyl 1-phosphate + UMP + 2 H(+). It functions in the pathway glycolipid biosynthesis; lipid IV(A) biosynthesis; lipid IV(A) from (3R)-3-hydroxytetradecanoyl-[acyl-carrier-protein] and UDP-N-acetyl-alpha-D-glucosamine: step 4/6. Its function is as follows. Hydrolyzes the pyrophosphate bond of UDP-2,3-diacylglucosamine to yield 2,3-diacylglucosamine 1-phosphate (lipid X) and UMP by catalyzing the attack of water at the alpha-P atom. Involved in the biosynthesis of lipid A, a phosphorylated glycolipid that anchors the lipopolysaccharide to the outer membrane of the cell. This is UDP-2,3-diacylglucosamine hydrolase from Shigella sonnei (strain Ss046).